Here is a 547-residue protein sequence, read N- to C-terminus: Probable aquaporin-5 (547 aa).

Over residues 1-13 the composition is skewed to polar residues; the sequence is MSSSILNNRSARS. The tract at residues 1-208 is disordered; it reads MSSSILNNRS…DPRIPPNDRR (208 aa). Residues 1-269 are Cytoplasmic-facing; it reads MSSSILNNRS…QWMNSNFKNH (269 aa). The segment covering 15 to 32 has biased composition (low complexity); the sequence is PAGANPAFNPPAEASSSS. Basic and acidic residues-rich tracts occupy residues 152–169 and 198–208; these read EYERYYRNEGRNDRDRYT and DDPRIPPNDRR. Residues 270–290 form a helical membrane-spanning segment; that stretch reads FVAGVGEFIGTTMFLFFAFAG. Topologically, residues 291–316 are extracellular; it reads TEVANIQADTTNRTTTGESTGSLNVS. 2 N-linked (GlcNAc...) asparagine glycosylation sites follow: asparagine 302 and asparagine 314. The chain crosses the membrane as a helical span at residues 317–337; the sequence is KLLYISIIFGFSLMVNVWVFF. At 338–363 the chain is on the cytoplasmic side; that stretch reads RISGGLFNPAVTMAMLMVKAISVTRA. Residues 345-347 carry the NPA 1 motif; it reads NPA. The helical transmembrane segment at 364–384 threads the bilayer; that stretch reads IVLFLAQILGSMLASVVVRYL. Over 385–400 the chain is Extracellular; that stretch reads FPETFNVRTTLGGGAS. A helical transmembrane segment spans residues 401–421; that stretch reads LVQGVFIEALLTAELVFTIFM. Residues 422–428 are Cytoplasmic-facing; it reads LAKEKHR. A helical transmembrane segment spans residues 429 to 449; that stretch reads ATFIAPVGIGLALFIAEMVGV. Over 450–475 the chain is Extracellular; it reads QFTGGSLNPARSFGPCVITGSFDTEH. Positions 457 to 459 match the NPA 2 motif; it reads NPA. Residues 476 to 496 form a helical membrane-spanning segment; it reads WIYWVGPAIGSLIAVCFYWFI. Topologically, residues 497–547 are cytoplasmic; it reads KTLEYEMANPGADGDDLNDPTKNPEKRAEIQASKPVPTAAFGSGKTASILS. The disordered stretch occupies residues 510–547; that stretch reads GDDLNDPTKNPEKRAEIQASKPVPTAAFGSGKTASILS.

Belongs to the MIP/aquaporin (TC 1.A.8) family.

The protein localises to the membrane. It carries out the reaction H2O(in) = H2O(out). Its function is as follows. Probable water channel that may have redundant functions with FgAQP3. The sequence is that of Probable aquaporin-5 from Gibberella zeae (strain ATCC MYA-4620 / CBS 123657 / FGSC 9075 / NRRL 31084 / PH-1) (Wheat head blight fungus).